We begin with the raw amino-acid sequence, 374 residues long: Putative L-lysine 2,3-aminomutase aq_1632 (374 aa).

Residues 86–314 (HKYPDTALLL…ARVRYVMSHE (229 aa)) form the Radical SAM core domain. Cysteine 100, cysteine 104, and cysteine 107 together coordinate [4Fe-4S] cluster. Lysine 317 carries the post-translational modification N6-(pyridoxal phosphate)lysine.

The protein belongs to the radical SAM superfamily. KamA family. [4Fe-4S] cluster serves as cofactor. Pyridoxal 5'-phosphate is required as a cofactor.

This Aquifex aeolicus (strain VF5) protein is Putative L-lysine 2,3-aminomutase aq_1632.